A 488-amino-acid chain; its full sequence is Intron-encoded DNA endonuclease I-AniI (488 aa).

The interval 1 to 169 (MRILKSHPLL…DIVEFIWGGL (169 aa)) is cobA exon 1 encoded. Residues 170–488 (YTDEPQCGDV…SEKIKIPSNY (319 aa)) form a cobA intron encoded region.

In the C-terminal section; belongs to the LAGLIDADG endonuclease family. In terms of assembly, homodimer. It depends on Mg(2+) as a cofactor. The mature protein may arise from proteolytic cleavage of an in-frame translation of cobA exon 1 plus intron, containing the I-AniI open reading frame. Cleavage may take place close to Met-213 resulting in an active endonuclease/maturase of about 30 kDa.

Its subcellular location is the mitochondrion. Functionally, mitochondrial DNA endonuclease and mRNA maturase involved in intron homing and required for splicing of the cytochrome b (cobA) gene intron, containing its own coding sequence. The protein stimulates the intrinsic ribozyme activity of the intron through binding to and stabilizing specific secondary and tertiary structure elements in the RNA. As an endonuclease it introduces a specific double-strand break at the junction of the two exons the cobA gene and thus mediates the insertion of an intron, containing its own coding sequence (group I intron), into an intronless gene. Recognizes with limited specificity and cleaves the sequence 5'-GAGGAGGTTTCTCTGTA-3'. The proteins RNA and DNA recognition and binding surfaces are independent. This Emericella nidulans (Aspergillus nidulans) protein is Intron-encoded DNA endonuclease I-AniI (I-AniI).